Here is a 286-residue protein sequence, read N- to C-terminus: UPF0761 membrane protein KPK_5501 (286 aa).

7 helical membrane passes run 44–64 (LLSLVPLIAVVFALFAAFPMF), 74–94 (FIFANFIPATGDVIQGYIEQF), 104–124 (VGAFGLIVTSLLLMYSIDSAL), 140–160 (FAVYWMILTLGPLLAGASLAI), 183–203 (LFPLILSWAAFWLLYSIVPTT), 210–230 (AVIGALVAALLFEAGKKAFAL), and 244–264 (VISVVPILFVWVYWTWCIVLL).

Belongs to the UPF0761 family.

It localises to the cell inner membrane. This is UPF0761 membrane protein KPK_5501 from Klebsiella pneumoniae (strain 342).